We begin with the raw amino-acid sequence, 226 residues long: PKHD-type hydroxylase mma_3620 (226 aa).

A Fe2OG dioxygenase domain is found at 78-178 (RYMPPLFNRY…RVCSFFWLQS (101 aa)). His-96, Asp-98, and His-159 together coordinate Fe cation. Arg-169 is a binding site for 2-oxoglutarate.

The cofactor is Fe(2+). Requires L-ascorbate as cofactor.

The sequence is that of PKHD-type hydroxylase mma_3620 from Janthinobacterium sp. (strain Marseille) (Minibacterium massiliensis).